A 190-amino-acid chain; its full sequence is Superoxide dismutase [Cu-Zn] (190 aa).

Positions 1 to 23 (MKLTNLALAFTLFGASAVAFAHA) are cleaved as a signal peptide. The Cu cation site is built by His83, His85, and His108. The cysteines at positions 90 and 186 are disulfide-linked. Positions 108, 117, 126, and 129 each coordinate Zn(2+). The disordered stretch occupies residues 162–181 (MIHEGGDNHSDHPAPLGGGG). A Cu cation-binding site is contributed by His164.

It belongs to the Cu-Zn superoxide dismutase family. In terms of assembly, homodimer. Requires Cu cation as cofactor. The cofactor is Zn(2+).

The protein resides in the periplasm. It catalyses the reaction 2 superoxide + 2 H(+) = H2O2 + O2. Its function is as follows. Destroys radicals which are normally produced within the cells and which are toxic to biological systems. The chain is Superoxide dismutase [Cu-Zn] (sodC) from Actinobacillus pleuropneumoniae (Haemophilus pleuropneumoniae).